Reading from the N-terminus, the 415-residue chain is Chorismate synthase (415 aa).

The segment at 43 to 72 (EDLDRRKPGQSMITTSRGEPDKVSIKSGLQ) is disordered. An NADP(+)-binding site is contributed by arginine 48. FMN contacts are provided by residues 125 to 127 (RSS), glycine 304, 319 to 323 (HAPVS), and arginine 346. A disordered region spans residues 262 to 310 (TDYTEDWEFGESEATASENASGDEPRARGDPKPVGNDHGGIQGGITTGD). Gly residues predominate over residues 298 to 307 (DHGGIQGGIT). Basic and acidic residues predominate over residues 379–393 (PDRLDDRPGEYDTDY). The segment at 379-415 (PDRLDDRPGEYDTDYHPSSPRNDPEDADTHATTVDED) is disordered.

The protein belongs to the chorismate synthase family. The cofactor is FMNH2.

The catalysed reaction is 5-O-(1-carboxyvinyl)-3-phosphoshikimate = chorismate + phosphate. It functions in the pathway metabolic intermediate biosynthesis; chorismate biosynthesis; chorismate from D-erythrose 4-phosphate and phosphoenolpyruvate: step 7/7. Functionally, catalyzes the anti-1,4-elimination of the C-3 phosphate and the C-6 proR hydrogen from 5-enolpyruvylshikimate-3-phosphate (EPSP) to yield chorismate, which is the branch point compound that serves as the starting substrate for the three terminal pathways of aromatic amino acid biosynthesis. This reaction introduces a second double bond into the aromatic ring system. This Halomicrobium mukohataei (strain ATCC 700874 / DSM 12286 / JCM 9738 / NCIMB 13541) (Haloarcula mukohataei) protein is Chorismate synthase.